The sequence spans 356 residues: S-adenosylmethionine:tRNA ribosyltransferase-isomerase (356 aa).

This sequence belongs to the QueA family. As to quaternary structure, monomer.

It is found in the cytoplasm. The enzyme catalyses 7-aminomethyl-7-carbaguanosine(34) in tRNA + S-adenosyl-L-methionine = epoxyqueuosine(34) in tRNA + adenine + L-methionine + 2 H(+). The protein operates within tRNA modification; tRNA-queuosine biosynthesis. In terms of biological role, transfers and isomerizes the ribose moiety from AdoMet to the 7-aminomethyl group of 7-deazaguanine (preQ1-tRNA) to give epoxyqueuosine (oQ-tRNA). The polypeptide is S-adenosylmethionine:tRNA ribosyltransferase-isomerase (Citrobacter koseri (strain ATCC BAA-895 / CDC 4225-83 / SGSC4696)).